The following is a 463-amino-acid chain: Soluble pyridine nucleotide transhydrogenase (463 aa).

An FAD-binding site is contributed by Glu-35 to Cys-44.

It belongs to the class-I pyridine nucleotide-disulfide oxidoreductase family. It depends on FAD as a cofactor.

It is found in the cytoplasm. The catalysed reaction is NAD(+) + NADPH = NADH + NADP(+). Its function is as follows. Conversion of NADPH, generated by peripheral catabolic pathways, to NADH, which can enter the respiratory chain for energy generation. This is Soluble pyridine nucleotide transhydrogenase from Chromohalobacter salexigens (strain ATCC BAA-138 / DSM 3043 / CIP 106854 / NCIMB 13768 / 1H11).